The sequence spans 777 residues: Cyclin-F (777 aa).

The Nuclear localization signal 1 motif lies at Lys-20 to Arg-28. Positions Asn-29–Ala-76 constitute an F-box domain. In terms of domain architecture, Cyclin N-terminal spans Gln-288–Ile-405. Short sequence motifs (d box) lie at residues Arg-310 to Leu-313, Arg-343 to Leu-346, and Arg-349 to Leu-352. 2 disordered regions span residues Gln-544–Ala-591 and Gln-651–Ser-777. The short motif at Arg-568–Arg-574 is the Nuclear localization signal 2 element. The segment at Arg-582–Lys-761 is PEST. Composition is skewed to low complexity over residues Ser-695–Ser-708 and Ser-719–Thr-731. Polar residues predominate over residues Pro-751 to Val-767. Residues Arg-762–Leu-765 carry the D box 4 motif. The span at His-768–Ser-777 shows a compositional bias: basic and acidic residues.

This sequence belongs to the cyclin family. Cyclin AB subfamily. Component of the SCF(CCNF) complex consisting of CUL1, RBX1, SKP1 and CCNF. Interacts with SKP1. Interacts with CUL1. Interacts with CCNB1; interaction is required for nuclear localization of CCNB1. Interacts with CCP110; this interaction leads to CCP110 ubiquitination and degradation via the proteasome pathway. Interacts (via the Cyclin N-terminal domain) with MYBL2/BMYB. Interacts with FZR1/CDH1 (via N-terminus). Interacts with RRM2 (via Cy motif and when phosphorylated at 'Thr-33'); the interaction occurs exclusively in G2 and early M. Interacts with CDC6 (via Cy motif); the interaction takes place during G2 and M phase. Degraded when the spindle assembly checkpoint is activated during the G2-M transition. Degradation is not dependent on the proteasome or ubiquitin and depends on the C-terminal PEST sequence. In terms of processing, phosphorylated just before cells enter into mitosis. Post-translationally, ubiquitinated by the anaphase-promoting complex (APC/C); leading to its degradation by the proteasome.

The protein resides in the nucleus. It localises to the cytoplasm. It is found in the perinuclear region. The protein localises to the cytoskeleton. Its subcellular location is the microtubule organizing center. The protein resides in the centrosome. It localises to the centriole. Its function is as follows. Substrate recognition component of a SCF (SKP1-CUL1-F-box protein) E3 ubiquitin-protein ligase complex which mediates the ubiquitination and subsequent proteasomal degradation of target proteins. The SCF(CCNF) E3 ubiquitin-protein ligase complex is an integral component of the ubiquitin proteasome system (UPS) and links proteasome degradation to the cell cycle. Mediates the substrate recognition and the proteasomal degradation of various target proteins involved in the regulation of cell cycle progression and in the maintenance of genome stability. Mediates the ubiquitination and subsequent proteasomal degradation of CP110 during G2 phase, thereby acting as an inhibitor of centrosome reduplication. In G2, mediates the ubiquitination and proteasomal degradation of CDC6, thereby suppressing DNA re-replication and preventing genome instability. Involved in the ubiquitination and degradation of the substrate adapter CDH1 of the anaphase-promoting complex (APC/C), thereby acting as an antagonist of APC/C in regulating G1 progression and S phase entry. May play a role in the G2 cell cycle checkpoint control after DNA damage, possibly by promoting the ubiquitination of MYBL2/BMYB. This Mus musculus (Mouse) protein is Cyclin-F (Ccnf).